A 212-amino-acid chain; its full sequence is MVDCVVKNWQGEEVGQATLNLRVAKEESAAHIVHRSLRLQMANNRQGTASTKTRSEVRGGGRKPWRQKGTGRARAGSIRSPLWRGGGVIFGPKPRDYSHKMNRKEKRLALSTAFQSRSEDLIVIEDLSEQFTKPKTKELVQAITRWGIDIQAKIVLVLPEKQENVYLSGRNIAKLKIILANNLNIYDILAADKIIATVTAIAKIQEVYGNET.

Residues 43 to 52 (NNRQGTASTK) show a composition bias toward polar residues. The tract at residues 43–77 (NNRQGTASTKTRSEVRGGGRKPWRQKGTGRARAGS) is disordered. Basic residues predominate over residues 60 to 71 (GGRKPWRQKGTG).

This sequence belongs to the universal ribosomal protein uL4 family. In terms of assembly, part of the 50S ribosomal subunit.

In terms of biological role, one of the primary rRNA binding proteins, this protein initially binds near the 5'-end of the 23S rRNA. It is important during the early stages of 50S assembly. It makes multiple contacts with different domains of the 23S rRNA in the assembled 50S subunit and ribosome. Its function is as follows. Forms part of the polypeptide exit tunnel. This chain is Large ribosomal subunit protein uL4, found in Trichodesmium erythraeum (strain IMS101).